The following is a 76-amino-acid chain: Acyl carrier protein (76 aa).

Positions 1 to 76 (MAIFDDIKEV…DVVRYIETNK (76 aa)) constitute a Carrier domain. Ser-36 is modified (O-(pantetheine 4'-phosphoryl)serine).

This sequence belongs to the acyl carrier protein (ACP) family. Post-translationally, 4'-phosphopantetheine is transferred from CoA to a specific serine of apo-ACP by AcpS. This modification is essential for activity because fatty acids are bound in thioester linkage to the sulfhydryl of the prosthetic group.

The protein resides in the cytoplasm. It functions in the pathway lipid metabolism; fatty acid biosynthesis. In terms of biological role, carrier of the growing fatty acid chain in fatty acid biosynthesis. This chain is Acyl carrier protein, found in Wolinella succinogenes (strain ATCC 29543 / DSM 1740 / CCUG 13145 / JCM 31913 / LMG 7466 / NCTC 11488 / FDC 602W) (Vibrio succinogenes).